The following is a 150-amino-acid chain: Catabolic 3-dehydroquinase (150 aa).

Residue tyrosine 24 is the Proton acceptor of the active site. Substrate is bound by residues asparagine 75, histidine 81, and aspartate 88. The active-site Proton donor is histidine 101. Residues valine 102–serine 103 and arginine 112 contribute to the substrate site.

This sequence belongs to the type-II 3-dehydroquinase family. In terms of assembly, homododecamer. Adopts a ring-like structure, composed of an arrangement of two hexameric rings stacked on top of one another.

It carries out the reaction 3-dehydroquinate = 3-dehydroshikimate + H2O. It functions in the pathway aromatic compound metabolism; 3,4-dihydroxybenzoate biosynthesis; 3,4-dihydroxybenzoate from 3-dehydroquinate: step 1/2. In terms of biological role, is involved in the catabolism of quinate. Allows the utilization of quinate as carbon source via the beta-ketoadipate pathway. The chain is Catabolic 3-dehydroquinase from Aspergillus clavatus (strain ATCC 1007 / CBS 513.65 / DSM 816 / NCTC 3887 / NRRL 1 / QM 1276 / 107).